The sequence spans 221 residues: Serine/arginine-rich splicing factor 2 (221 aa).

Residue serine 2 is modified to N-acetylserine. Serine 2 is modified (phosphoserine). One can recognise an RRM domain in the interval 14–92 (TSLKVDNLTY…RELRVQMARY (79 aa)). Phosphothreonine is present on residues threonine 22 and threonine 25. Serine 26 carries the phosphoserine modification. Position 52 is an N6-acetyllysine (lysine 52). A disordered region spans residues 92–221 (YGRPPDSHHS…SPEEEGAVSS (130 aa)). Basic residues-rich tracts occupy residues 117–171 (RRSR…RSKS) and 179–189 (SRSRSRSRSRS). Serine 189, serine 191, serine 204, serine 206, serine 208, serine 212, and serine 220 each carry phosphoserine.

The protein belongs to the splicing factor SR family. As to quaternary structure, in vitro, self-associates and binds SRSF1/SFRS1 (ASF/SF2), SNRNP70 and U2AF1 but not U2AF2. Binds SREK1/SFRS12. Interacts with CCNL1 and CCNL2. Interacts with SCAF11. Interacts with ZRSR2/U2AF1-RS2. Interacts with CCDC55 (via C-terminus). Interacts with BRDT. In terms of processing, extensively phosphorylated on serine residues in the RS domain. Phosphorylated by SRPK2 and this causes its redistribution from the nuclear speckle to nucleoplasm and controls cell fate decision in response to cisplatin treatment. KAT5/TIP60 inhibits its phosphorylation by preventing SRPK2 nuclear translocation. Acetylation on Lys-52 by KAT5/TIP60 promotes its proteasomal degradation. This effect is counterbalanced by HDAC6, which positively controls SRSF2 protein level by deacetylating it and preventing its proteasomal degradation.

The protein localises to the nucleus. The protein resides in the nucleoplasm. It is found in the nucleus speckle. Necessary for the splicing of pre-mRNA. It is required for formation of the earliest ATP-dependent splicing complex and interacts with spliceosomal components bound to both the 5'- and 3'-splice sites during spliceosome assembly. It also is required for ATP-dependent interactions of both U1 and U2 snRNPs with pre-mRNA. Interacts with other spliceosomal components, via the RS domains, to form a bridge between the 5'- and 3'-splice site binding components, U1 snRNP and U2AF. Binds to purine-rich RNA sequences, either 5'-AGSAGAGTA-3' (S=C or G) or 5'-GTTCGAGTA-3'. Can bind to beta-globin mRNA and commit it to the splicing pathway. The phosphorylated form (by SRPK2) is required for cellular apoptosis in response to cisplatin treatment. This Sus scrofa (Pig) protein is Serine/arginine-rich splicing factor 2 (SRSF2).